Consider the following 113-residue polypeptide: Tubulin-folding cofactor A (113 aa).

Residues 83-113 (LEETDEKEGPEIEDAKKTVADVEKQFPTEDA) are disordered. A compositionally biased stretch (basic and acidic residues) spans 89–113 (KEGPEIEDAKKTVADVEKQFPTEDA).

The protein belongs to the TBCA family. Monomer. Supercomplex made of cofactors A to E. Cofactors A and D function by capturing and stabilizing tubulin in a quasi-native conformation. Cofactor E binds to the cofactor D-tubulin complex; interaction with cofactor C then causes the release of tubulin polypeptides that are committed to the native state. Interacts with TUBB9. Expressed in leaves, roots, flowers and stems.

Functionally, tubulin-folding protein involved in the control of the alpha-/beta-tubulin monomer balance. Functions as a reservoir of bound and non-toxic beta-tubulin. Required in the developing embryo. This Arabidopsis thaliana (Mouse-ear cress) protein is Tubulin-folding cofactor A (TFCA).